A 453-amino-acid polypeptide reads, in one-letter code: Bifunctional protein GlmU (453 aa).

The interval 1-225 (MNIVILAAGT…EWETLGVNSK (225 aa)) is pyrophosphorylase. UDP-N-acetyl-alpha-D-glucosamine-binding positions include 6–9 (LAAG), K20, Q71, 76–77 (GT), 98–100 (YGD), G135, E150, N165, and N223. Position 100 (D100) interacts with Mg(2+). N223 serves as a coordination point for Mg(2+). Positions 226–246 (AQLAELERIHQRNLADALLAA) are linker. Residues 247–453 (GVTLADPARI…GYVRPVKKKS (207 aa)) form an N-acetyltransferase region. UDP-N-acetyl-alpha-D-glucosamine is bound by residues R329 and K347. Residue H359 is the Proton acceptor of the active site. Y362 and N373 together coordinate UDP-N-acetyl-alpha-D-glucosamine. Residues A376, 382 to 383 (NY), S401, and A419 contribute to the acetyl-CoA site.

This sequence in the N-terminal section; belongs to the N-acetylglucosamine-1-phosphate uridyltransferase family. The protein in the C-terminal section; belongs to the transferase hexapeptide repeat family. Homotrimer. The cofactor is Mg(2+).

The protein localises to the cytoplasm. It catalyses the reaction alpha-D-glucosamine 1-phosphate + acetyl-CoA = N-acetyl-alpha-D-glucosamine 1-phosphate + CoA + H(+). It carries out the reaction N-acetyl-alpha-D-glucosamine 1-phosphate + UTP + H(+) = UDP-N-acetyl-alpha-D-glucosamine + diphosphate. It participates in nucleotide-sugar biosynthesis; UDP-N-acetyl-alpha-D-glucosamine biosynthesis; N-acetyl-alpha-D-glucosamine 1-phosphate from alpha-D-glucosamine 6-phosphate (route II): step 2/2. It functions in the pathway nucleotide-sugar biosynthesis; UDP-N-acetyl-alpha-D-glucosamine biosynthesis; UDP-N-acetyl-alpha-D-glucosamine from N-acetyl-alpha-D-glucosamine 1-phosphate: step 1/1. Its pathway is bacterial outer membrane biogenesis; LPS lipid A biosynthesis. Functionally, catalyzes the last two sequential reactions in the de novo biosynthetic pathway for UDP-N-acetylglucosamine (UDP-GlcNAc). The C-terminal domain catalyzes the transfer of acetyl group from acetyl coenzyme A to glucosamine-1-phosphate (GlcN-1-P) to produce N-acetylglucosamine-1-phosphate (GlcNAc-1-P), which is converted into UDP-GlcNAc by the transfer of uridine 5-monophosphate (from uridine 5-triphosphate), a reaction catalyzed by the N-terminal domain. In Burkholderia mallei (strain NCTC 10247), this protein is Bifunctional protein GlmU.